Here is a 597-residue protein sequence, read N- to C-terminus: MKHIRNFSIIAHIDHGKSTLSDRLIQVCGGLSDREMAAQVLDSMDLERERGITIKAQSVTLNYTANDGETYQLNFIDTPGHVDFSYEVSRSLAACEGALLVVDAGQGVEAQTLANCYTALEMDLEVVPILNKIDLPAADPDRVAEEIEDIVGIEAMEATRCSAKTGLGVDAVLETIVKCIPAPEGNPEGPTQALIIDSWFDNYLGVVSLVRVKHGSLKKNDKIKVMSTGQAWNVDRIGIFTPKQVDTDGLNTGEVGWVVCGIKDILGAPVGDTLTHAKGGCEERLPGFQKVKPQVYAGLFPISSDDYENFRDALGKLSLNDASLFYEPESSSALGFGFRCGFLGMLHMEIIQERLEREYDLDLITTAPTVVYEVVLNNGDLLYVDSPAKLPAVNDLDEIREPIARCNILVPAEYLGNVISLCIEKRGTQVDMIYHGNQVALTYDIPMSEVVLDFFDRLKSTSRGYASLDYNFQRYELSNMVRVDVLINAERVDALAIITHHDNAQGRGRLLVEKMKEFIPRQMFDIAIQAAIGGHIIARSTVKQLRKNVIAKCYGGDISRKKKLLKKQKDGKKRMKQIGNVELPQEAFLAILHVGKD.

A tr-type G domain is found at 2–184 (KHIRNFSIIA…TIVKCIPAPE (183 aa)). GTP-binding positions include 14–19 (DHGKST) and 131–134 (NKID).

The protein belongs to the TRAFAC class translation factor GTPase superfamily. Classic translation factor GTPase family. LepA subfamily.

The protein resides in the cell inner membrane. The enzyme catalyses GTP + H2O = GDP + phosphate + H(+). Its function is as follows. Required for accurate and efficient protein synthesis under certain stress conditions. May act as a fidelity factor of the translation reaction, by catalyzing a one-codon backward translocation of tRNAs on improperly translocated ribosomes. Back-translocation proceeds from a post-translocation (POST) complex to a pre-translocation (PRE) complex, thus giving elongation factor G a second chance to translocate the tRNAs correctly. Binds to ribosomes in a GTP-dependent manner. This Aliivibrio salmonicida (strain LFI1238) (Vibrio salmonicida (strain LFI1238)) protein is Elongation factor 4.